Reading from the N-terminus, the 245-residue chain is uncharacterized protein (245 aa).

2 consecutive transmembrane segments (helical) span residues 29–51 (LVVL…RIGM) and 61–83 (TILF…LMLH).

The protein localises to the cell membrane. This is an uncharacterized protein from Treponema pallidum (strain Nichols).